The sequence spans 340 residues: Protein phosphatase PTC7 homolog fig (340 aa).

In terms of domain architecture, PPM-type phosphatase spans 58 to 314 (RAQAETIQAP…DDITVVLASV (257 aa)). Positions 90, 91, and 236 each coordinate Mn(2+).

Belongs to the PP2C family. Mg(2+) is required as a cofactor. Mn(2+) serves as cofactor.

The enzyme catalyses O-phospho-L-seryl-[protein] + H2O = L-seryl-[protein] + phosphate. It carries out the reaction O-phospho-L-threonyl-[protein] + H2O = L-threonyl-[protein] + phosphate. The chain is Protein phosphatase PTC7 homolog fig from Drosophila pseudoobscura pseudoobscura (Fruit fly).